We begin with the raw amino-acid sequence, 523 residues long: Cytochrome P450 52A3-A (523 aa).

Residues 17-34 (WYTILFGAAVTYFLSIAL) form a helical membrane-spanning segment. Heme is bound at residue cysteine 471.

It belongs to the cytochrome P450 family. It depends on heme as a cofactor.

The protein resides in the membrane. In terms of biological role, together with an NADPH cytochrome P450 the enzyme system catalyzes the terminal hydroxylation as the first step in the assimilation of alkanes and fatty acids. In Candida maltosa (Yeast), this protein is Cytochrome P450 52A3-A (CYP52A3-A).